A 216-amino-acid chain; its full sequence is MTFKLRETIKINHKKVQRIMQWLGLKGKCKTQKYRSYQGEVGHIADNLLQRDFTATQPNEKWTTDITEFKCAEGKLYLSPIKDLFNNEIIAYDLARSPNFEQITRMMKQAVARLEGAKPILHSDQGWQYQMIGYQNILRENGIQQSMSRKGNCLYNSAMESFFGRLKTECYYGKRFETFEQLEKTIHEYIHYYNHERIQGKLKGLSPVNYRTQSLN.

The Integrase catalytic domain maps to threonine 54 to leucine 215.

The protein belongs to the transposase IS3/IS150/IS904 family.

This is an uncharacterized protein from Haemophilus influenzae (strain ATCC 51907 / DSM 11121 / KW20 / Rd).